We begin with the raw amino-acid sequence, 457 residues long: Multidrug resistance protein MdtK (457 aa).

12 helical membrane passes run Leu11–Val31, Ile53–Ala73, Trp93–Ile113, Ala127–Ala147, Gly160–Tyr180, Gly189–Val209, Leu243–Val263, Ile276–Thr296, Ala314–Val334, Val350–Ile370, Ile387–Ala407, and Pro418–Leu438.

Belongs to the multi antimicrobial extrusion (MATE) (TC 2.A.66.1) family. MdtK subfamily.

Its subcellular location is the cell inner membrane. Its function is as follows. Multidrug efflux pump that functions probably as a Na(+)/drug antiporter. The polypeptide is Multidrug resistance protein MdtK (Escherichia coli O127:H6 (strain E2348/69 / EPEC)).